Reading from the N-terminus, the 492-residue chain is Beta-Ala-His dipeptidase (492 aa).

Residue His-107 coordinates Zn(2+). The active site involves Asp-109. Asp-140 is a Zn(2+) binding site. Glu-174 functions as the Proton acceptor in the catalytic mechanism. Glu-175 is a binding site for Zn(2+). The residue at position 194 (Ser-194) is a Phosphoserine. 2 residues coordinate Zn(2+): Asp-203 and His-453.

This sequence belongs to the peptidase M20A family. As to quaternary structure, homodimer. It depends on Zn(2+) as a cofactor. In terms of tissue distribution, detected exclusively in kidney.

Its subcellular location is the secreted. It carries out the reaction Preferential hydrolysis of the beta-Ala-|-His dipeptide (carnosine), and also anserine, Xaa-|-His dipeptides and other dipeptides including homocarnosine.. The enzyme catalyses carnosine + H2O = beta-alanine + L-histidine. The catalysed reaction is anserine + H2O = N(pros)-methyl-L-histidine + beta-alanine. It catalyses the reaction L-alanyl-L-histidine + H2O = L-histidine + L-alanine. It carries out the reaction glycyl-L-histidine + H2O = L-histidine + glycine. The enzyme catalyses L-homocarnosine + H2O = 4-aminobutanoate + L-histidine. Catalyzes the peptide bond hydrolysis in Xaa-His dipeptides, displaying the highest activity toward carnosine (beta-alanyl-L-histidine) and anserine (beta-alanyl-3-methyl-histidine). This is Beta-Ala-His dipeptidase (Cndp1) from Mus musculus (Mouse).